A 193-amino-acid polypeptide reads, in one-letter code: Holliday junction branch migration complex subunit RuvA (193 aa).

Residues 1-64 (MIGRIAGTLI…EDAHLLYGFG (64 aa)) form a domain I region. Positions 65–143 (TAAERETFRQ…ADLGTVPGGP (79 aa)) are domain II. Positions 144–151 (AVSDDAVD) are flexible linker. A domain III region spans residues 151–193 (DVLNALLALGYSDKEAAQAIKQVPAGTGVSEGIKLALKALSKG).

It belongs to the RuvA family. As to quaternary structure, homotetramer. Forms an RuvA(8)-RuvB(12)-Holliday junction (HJ) complex. HJ DNA is sandwiched between 2 RuvA tetramers; dsDNA enters through RuvA and exits via RuvB. An RuvB hexamer assembles on each DNA strand where it exits the tetramer. Each RuvB hexamer is contacted by two RuvA subunits (via domain III) on 2 adjacent RuvB subunits; this complex drives branch migration. In the full resolvosome a probable DNA-RuvA(4)-RuvB(12)-RuvC(2) complex forms which resolves the HJ.

It is found in the cytoplasm. Functionally, the RuvA-RuvB-RuvC complex processes Holliday junction (HJ) DNA during genetic recombination and DNA repair, while the RuvA-RuvB complex plays an important role in the rescue of blocked DNA replication forks via replication fork reversal (RFR). RuvA specifically binds to HJ cruciform DNA, conferring on it an open structure. The RuvB hexamer acts as an ATP-dependent pump, pulling dsDNA into and through the RuvAB complex. HJ branch migration allows RuvC to scan DNA until it finds its consensus sequence, where it cleaves and resolves the cruciform DNA. This Ralstonia nicotianae (strain ATCC BAA-1114 / GMI1000) (Ralstonia solanacearum) protein is Holliday junction branch migration complex subunit RuvA.